Consider the following 149-residue polypeptide: Transcriptional repressor NrdR (149 aa).

The segment at 3–34 (CPFCGNLETQVVETRVSEDADFIRRRRQCGAC) is a zinc-finger region. An ATP-cone domain is found at 49–139 (PAIVKKDGRR…VYRSFEDIDE (91 aa)).

Belongs to the NrdR family. It depends on Zn(2+) as a cofactor.

Functionally, negatively regulates transcription of bacterial ribonucleotide reductase nrd genes and operons by binding to NrdR-boxes. In Polaromonas sp. (strain JS666 / ATCC BAA-500), this protein is Transcriptional repressor NrdR.